The following is a 771-amino-acid chain: Caldesmon (771 aa).

Disordered regions lie at residues 23–91 (ERLS…ALLE) and 104–599 (LQEA…FSPK). Residues 26-199 (SYQRNDDDEE…PKEVPTEENQ (174 aa)) form a myosin and calmodulin-binding region. Y27 carries the phosphotyrosine modification. 9 stretches are compositionally biased toward basic and acidic residues: residues 47 to 67 (QERL…EKSE), 104 to 115 (LQEALERQKEFD), 139 to 155 (ITGK…RCEI), 170 to 194 (WRQD…KEVP), 203 to 215 (AVEK…EVVE), 240 to 435 (AADK…ESLP), 442 to 484 (SKKD…RELT), 509 to 518 (GSEKLKEKQQ), and 525 to 592 (DELK…EKKP). 10 consecutive repeat copies span residues 251–265 (EREK…RLKA), 266–278 (EEEK…KQKA), 279–291 (EEEK…RERA), 294–306 (EEEK…RERA), 309–321 (EEER…RERA), 324–336 (EEER…RAKA), 337–349 (EEER…RAKA), 350–362 (EEER…RAKA), 363–375 (EKER…RERA), and 378–390 (EEEK…KARL). Residues 251 to 390 (EREKLEAEEK…KRAAEEKARL (140 aa)) form a 10 X 13 AA approximate tandem repeats region. The tropomyosin-binding stretch occupies residues 523 to 580 (ELDELKKRREERRKILEEEEQKKKQEEAERKIREEEEKKRMKEEIERRRAEAAEKRQK). At S597 the chain carries Phosphoserine; by CDK1. A strong actin-binding region spans residues 612–644 (LNKSAQKSGMKPAHTTAVVSKIDSRLEQYTSAV). Residues 622 to 632 (KPAHTTAVVSK) form a tropomyosin-binding region. A Phosphotyrosine modification is found at Y640. The segment at 674–680 (WEKGNVF) is calmodulin-binding. The disordered stretch occupies residues 676–771 (KGNVFSSPGG…NGLRQFEKEP (96 aa)). Residues 679–691 (VFSSPGGTGTPNK) show a composition bias toward polar residues. The residue at position 682 (S682) is a Phosphoserine; by CDK1. A phosphothreonine; by CDK1 mark is found at T688 and T711. A Phosphoserine; by CDK1 modification is found at S717. Over residues 723–742 (SDLRPGDVSGKRNLWEKQSV) the composition is skewed to basic and acidic residues. The segment at 726-752 (RPGDVSGKRNLWEKQSVEKPAASSSKV) is weak actin-binding.

It belongs to the caldesmon family. In terms of processing, phosphorylated in non-muscle cells. Phosphorylation by CDK1 during mitosis causes caldesmon to dissociate from microfilaments. Phosphorylation reduces caldesmon binding to actin, myosin, and calmodulin as well as its inhibition of actomyosin ATPase activity. Phosphorylation also occurs in both quiescent and dividing smooth muscle cells with similar effects on the interaction with actin and calmodulin and on microfilaments reorganization. High-molecular-weight caldesmon (h-caldesmon) is predominantly expressed in smooth muscles, whereas low-molecular-weight caldesmon (l-caldesmon) is widely distributed in non-muscle tissues and cells. Not expressed in skeletal muscle or heart.

It localises to the cytoplasm. The protein localises to the cytoskeleton. It is found in the myofibril. Its subcellular location is the stress fiber. Actin- and myosin-binding protein implicated in the regulation of actomyosin interactions in smooth muscle and nonmuscle cells (could act as a bridge between myosin and actin filaments). Stimulates actin binding of tropomyosin which increases the stabilization of actin filament structure. In muscle tissues, inhibits the actomyosin ATPase by binding to F-actin. This inhibition is attenuated by calcium-calmodulin and is potentiated by tropomyosin. Interacts with actin, myosin, two molecules of tropomyosin and with calmodulin. Also plays an essential role during cellular mitosis and receptor capping. This chain is Caldesmon (CALD1), found in Gallus gallus (Chicken).